The chain runs to 462 residues: L-seryl-tRNA(Sec) selenium transferase (462 aa).

At Lys-295 the chain carries N6-(pyridoxal phosphate)lysine.

The protein belongs to the SelA family. Homodecamer; pentamer of dimers. Binds only one seryl-tRNA(Sec) per dimer. It depends on pyridoxal 5'-phosphate as a cofactor.

The protein resides in the cytoplasm. The catalysed reaction is L-seryl-tRNA(Sec) + selenophosphate + H(+) = L-selenocysteinyl-tRNA(Sec) + phosphate. Its pathway is aminoacyl-tRNA biosynthesis; selenocysteinyl-tRNA(Sec) biosynthesis; selenocysteinyl-tRNA(Sec) from L-seryl-tRNA(Sec) (bacterial route): step 1/1. In terms of biological role, converts seryl-tRNA(Sec) to selenocysteinyl-tRNA(Sec) required for selenoprotein biosynthesis. The chain is L-seryl-tRNA(Sec) selenium transferase from Klebsiella pneumoniae (strain 342).